A 562-amino-acid chain; its full sequence is Membrane protein insertase YidC (562 aa).

Residues 4–24 form a helical membrane-spanning segment; the sequence is QRIFLFLALSILGLLLWTSWE. Residues 33 to 71 are disordered; the sequence is TEEVVEAEDDVPAPAETPDEAPDPADGETPARDRAEVED. A compositionally biased stretch (acidic residues) spans 35-58; it reads EVVEAEDDVPAPAETPDEAPDPAD. The segment covering 61 to 71 has biased composition (basic and acidic residues); the sequence is TPARDRAEVED. Transmembrane regions (helical) follow at residues 330–350, 356–376, 426–446, and 499–519; these read MTLS…FWLL, IVGN…LAFY, LGGC…YWVL, and IMMA…AGLV.

Belongs to the OXA1/ALB3/YidC family. Type 1 subfamily. Interacts with the Sec translocase complex via SecD. Specifically interacts with transmembrane segments of nascent integral membrane proteins during membrane integration.

It localises to the cell inner membrane. Its function is as follows. Required for the insertion and/or proper folding and/or complex formation of integral membrane proteins into the membrane. Involved in integration of membrane proteins that insert both dependently and independently of the Sec translocase complex, as well as at least some lipoproteins. Aids folding of multispanning membrane proteins. This chain is Membrane protein insertase YidC, found in Alkalilimnicola ehrlichii (strain ATCC BAA-1101 / DSM 17681 / MLHE-1).